Reading from the N-terminus, the 293-residue chain is Protease HtpX homolog (293 aa).

2 helical membrane passes run 7 to 26 and 30 to 49; these read ASLL…ALLG and GMVM…WYYS. H131 provides a ligand contact to Zn(2+). The active site involves E132. H135 provides a ligand contact to Zn(2+). 2 consecutive transmembrane segments (helical) span residues 148 to 168 and 180 to 200; these read ATLA…FWFF and IGAL…QLGI. Zn(2+) is bound at residue E205.

Belongs to the peptidase M48B family. Zn(2+) is required as a cofactor.

Its subcellular location is the cell inner membrane. The chain is Protease HtpX homolog from Acaryochloris marina (strain MBIC 11017).